Consider the following 306-residue polypeptide: Probable 2-dehydro-3-deoxygalactonokinase DgoK1 (306 aa).

Belongs to the DgoK family.

It catalyses the reaction 2-dehydro-3-deoxy-D-galactonate + ATP = 2-dehydro-3-deoxy-6-phospho-D-galactonate + ADP + H(+). It functions in the pathway carbohydrate acid metabolism; D-galactonate degradation; D-glyceraldehyde 3-phosphate and pyruvate from D-galactonate: step 2/3. Functionally, involved in the degradation of galactose via the DeLey-Doudoroff pathway. This is Probable 2-dehydro-3-deoxygalactonokinase DgoK1 (dgoK1) from Rhizobium meliloti (strain 1021) (Ensifer meliloti).